The sequence spans 321 residues: o-succinylbenzoate synthase (321 aa).

The active-site Proton donor is the lysine 134. Aspartate 162, glutamate 191, and aspartate 214 together coordinate Mg(2+). The Proton acceptor role is filled by lysine 236.

It belongs to the mandelate racemase/muconate lactonizing enzyme family. MenC type 1 subfamily. A divalent metal cation serves as cofactor.

It carries out the reaction (1R,6R)-6-hydroxy-2-succinyl-cyclohexa-2,4-diene-1-carboxylate = 2-succinylbenzoate + H2O. The protein operates within quinol/quinone metabolism; 1,4-dihydroxy-2-naphthoate biosynthesis; 1,4-dihydroxy-2-naphthoate from chorismate: step 4/7. It functions in the pathway quinol/quinone metabolism; menaquinone biosynthesis. Converts 2-succinyl-6-hydroxy-2,4-cyclohexadiene-1-carboxylate (SHCHC) to 2-succinylbenzoate (OSB). This chain is o-succinylbenzoate synthase, found in Enterobacter sp. (strain 638).